The sequence spans 197 residues: MSFTNLYQEIREEWKSLKKSEIYDVEKSRMIGWRHGPSVVRLDHPTRIDRARALGYKSKDGFIVVRSRVRRGGSNREKIMGGRRPRRLAYNKLTRKKSLKLIAEERAADKYPNLEVLNSYYVGEDGLYKYYEVILVDKSHPNIYNDPHISWISEPQNTGRVYRGLTSAGYKVRGLRTGRKGSSKSRPSIRANGRLRR.

A disordered region spans residues 175 to 197 (LRTGRKGSSKSRPSIRANGRLRR).

Belongs to the eukaryotic ribosomal protein eL15 family.

In Thermoplasma volcanium (strain ATCC 51530 / DSM 4299 / JCM 9571 / NBRC 15438 / GSS1), this protein is Large ribosomal subunit protein eL15 (rpl15e).